We begin with the raw amino-acid sequence, 385 residues long: Urotensin-2 receptor (385 aa).

Over 1 to 53 (MALSLESTSFPMLAVSRSTASELPGGFNVSHNSSWTGPTDPSSLQDLVATGVI) the chain is Extracellular. N-linked (GlcNAc...) asparagine glycosylation is found at Asn28 and Asn32. The helical transmembrane segment at 54–76 (GAVLSTMGVVGVVGNVYTLVVMC) threads the bilayer. The Cytoplasmic segment spans residues 77–86 (RFLRASASMY). A helical transmembrane segment spans residues 87-112 (VYVVNLALADLLYLLSIPFIVATYVT). Over 113-123 (KDWHFGDVGCR) the chain is Extracellular. The cysteines at positions 122 and 198 are disulfide-linked. The chain crosses the membrane as a helical span at residues 124–145 (VLFSLDFLTMHASIFTLTIMSS). At 146 to 166 (ERYAAVLRPLDTVQRSKGYRK) the chain is on the cytoplasmic side. Residues 167–185 (LLALGTWLLALLLTLPMML) form a helical membrane-spanning segment. Over 186–208 (AIRLVRRGSKSLCLPAWGPRAHR) the chain is Extracellular. The helical transmembrane segment at 209–231 (TYLTLLFGTSIVGPGLVIGLLYI) threads the bilayer. At 232–257 (RLARAYWLSQQASFKQTRRLPNPRVL) the chain is on the cytoplasmic side. Residues 258-283 (YLILGIVLLFWACFLPFWLWQLLAQY) form a helical membrane-spanning segment. Residues 284 to 298 (HQAMPLTPETARIIN) are Extracellular-facing. Residues 299 to 320 (YLTACLTYGNSCINPFLYTLLT) form a helical membrane-spanning segment. The Cytoplasmic segment spans residues 321–385 (KNYREYLRGR…SPVPPNGAFV (65 aa)).

It belongs to the G-protein coupled receptor 1 family.

The protein resides in the cell membrane. Functionally, high affinity receptor for urotensin-2 and urotensin-2B. The activity of this receptor is mediated by a G-protein that activate a phosphatidylinositol-calcium second messenger system. The polypeptide is Urotensin-2 receptor (Uts2r) (Mus musculus (Mouse)).